The following is a 191-amino-acid chain: Potassium-transporting ATPase KdpC subunit (191 aa).

A helical membrane pass occupies residues 13–35; sequence VLFTGLCGLAYPLAITGVAQAVL. The disordered stretch occupies residues 112 to 132; the sequence is SGPVPADAVTSSASGLDPDIS.

The protein belongs to the KdpC family. The system is composed of three essential subunits: KdpA, KdpB and KdpC.

It localises to the cell inner membrane. Part of the high-affinity ATP-driven potassium transport (or Kdp) system, which catalyzes the hydrolysis of ATP coupled with the electrogenic transport of potassium into the cytoplasm. This subunit acts as a catalytic chaperone that increases the ATP-binding affinity of the ATP-hydrolyzing subunit KdpB by the formation of a transient KdpB/KdpC/ATP ternary complex. The protein is Potassium-transporting ATPase KdpC subunit of Allorhizobium ampelinum (strain ATCC BAA-846 / DSM 112012 / S4) (Agrobacterium vitis (strain S4)).